A 312-amino-acid chain; its full sequence is Protoheme IX farnesyltransferase (312 aa).

The next 9 membrane-spanning stretches (helical) occupy residues 29 to 49 (VMSL…GHMN), 50 to 70 (PVLA…SGAL), 90 to 110 (IPAG…LSAF), 117 to 137 (LMVN…YAVI), 150 to 170 (IVIG…AATG), 177 to 197 (LVLF…LSLF), 223 to 243 (ALFY…MGFA), 246 to 266 (FYGV…WRLW), and 292 to 312 (IFAV…FGVF).

Belongs to the UbiA prenyltransferase family. Protoheme IX farnesyltransferase subfamily.

It is found in the cell inner membrane. The catalysed reaction is heme b + (2E,6E)-farnesyl diphosphate + H2O = Fe(II)-heme o + diphosphate. It functions in the pathway porphyrin-containing compound metabolism; heme O biosynthesis; heme O from protoheme: step 1/1. Functionally, converts heme B (protoheme IX) to heme O by substitution of the vinyl group on carbon 2 of heme B porphyrin ring with a hydroxyethyl farnesyl side group. In Brucella melitensis biotype 1 (strain ATCC 23456 / CCUG 17765 / NCTC 10094 / 16M), this protein is Protoheme IX farnesyltransferase.